Here is a 505-residue protein sequence, read N- to C-terminus: ATP synthase subunit alpha, chloroplastic (505 aa).

170-177 provides a ligand contact to ATP; it reads GDRQTGKT.

Belongs to the ATPase alpha/beta chains family. F-type ATPases have 2 components, CF(1) - the catalytic core - and CF(0) - the membrane proton channel. CF(1) has five subunits: alpha(3), beta(3), gamma(1), delta(1), epsilon(1). CF(0) has four main subunits: a, b, b' and c.

It localises to the plastid. The protein localises to the chloroplast thylakoid membrane. It carries out the reaction ATP + H2O + 4 H(+)(in) = ADP + phosphate + 5 H(+)(out). Functionally, produces ATP from ADP in the presence of a proton gradient across the membrane. The alpha chain is a regulatory subunit. The chain is ATP synthase subunit alpha, chloroplastic from Zygnema circumcarinatum (Green alga).